The chain runs to 466 residues: Asparagine--tRNA ligase (466 aa).

Belongs to the class-II aminoacyl-tRNA synthetase family. As to quaternary structure, homodimer.

It localises to the cytoplasm. It carries out the reaction tRNA(Asn) + L-asparagine + ATP = L-asparaginyl-tRNA(Asn) + AMP + diphosphate + H(+). This is Asparagine--tRNA ligase from Shewanella putrefaciens (strain CN-32 / ATCC BAA-453).